The sequence spans 169 residues: MLRSEKPVAVGDVVNIYKESPSIIITRYHGLTVSQVSSLRESLKSREAGFKVVKNTLAKIAAKQTGLDSIANLFAGPTAIVYSKEPVEMAKLVVNFAKSNGNLKIVGGIVDNRVLDEYSIKELSKLPSLNELRGKIVWLLQAPSTKVVGVLQAPSVSMARVLQAHASKN.

It belongs to the universal ribosomal protein uL10 family. As to quaternary structure, part of the ribosomal stalk of the 50S ribosomal subunit. The N-terminus interacts with L11 and the large rRNA to form the base of the stalk. The C-terminus forms an elongated spine to which L12 dimers bind in a sequential fashion forming a multimeric L10(L12)X complex.

Forms part of the ribosomal stalk, playing a central role in the interaction of the ribosome with GTP-bound translation factors. This is Large ribosomal subunit protein uL10 from Rickettsia akari (strain Hartford).